Here is a 92-residue protein sequence, read N- to C-terminus: Neurophysin 2 (92 aa).

7 disulfides stabilise this stretch: cysteine 7/cysteine 51, cysteine 10/cysteine 24, cysteine 18/cysteine 41, cysteine 25/cysteine 31, cysteine 58/cysteine 70, cysteine 64/cysteine 82, and cysteine 71/cysteine 76.

The protein belongs to the vasopressin/oxytocin family.

Its subcellular location is the secreted. Neurophysin 2 specifically binds the midbrain peptide hormone vasopressin. This is Neurophysin 2 (AVP) from Equus caballus (Horse).